Reading from the N-terminus, the 107-residue chain is Large ribosomal subunit protein mL55 (107 aa).

The N-terminal 16 residues, 1–16, are a transit peptide targeting the mitochondrion; the sequence is MLLKQLPQAVQQIRCI.

It belongs to the mitochondrion-specific ribosomal protein mL55 family. In terms of assembly, component of the mitochondrial ribosome large subunit (39S) which comprises a 16S rRNA and about 50 distinct proteins. In terms of tissue distribution, ubiquitously expressed (at protein level).

The protein resides in the mitochondrion. Involved in mitochondrial biogenesis and G2/M phase cell cycle progression. This chain is Large ribosomal subunit protein mL55 (mRpL55), found in Drosophila melanogaster (Fruit fly).